Here is a 502-residue protein sequence, read N- to C-terminus: 4-hydroxy-3-methylbut-2-enyl diphosphate reductase, chloroplastic (502 aa).

A chloroplast-targeting transit peptide spans 1–48 (MQVLPQTRVQGVPSGRNLSCSKAVGGTPLRALTRDVVRPARSVNVHVV). Cysteine 140 contributes to the [4Fe-4S] cluster binding site. Histidine 170 contacts (2E)-4-hydroxy-3-methylbut-2-enyl diphosphate. Cysteine 232 contacts [4Fe-4S] cluster. Histidine 260 contributes to the (2E)-4-hydroxy-3-methylbut-2-enyl diphosphate binding site. The active-site Proton donor is glutamate 262. Position 325 (threonine 325) interacts with (2E)-4-hydroxy-3-methylbut-2-enyl diphosphate. Cysteine 363 is a binding site for [4Fe-4S] cluster. (2E)-4-hydroxy-3-methylbut-2-enyl diphosphate is bound by residues 398-400 (SSN) and serine 461.

The protein belongs to the IspH family. Homodimer. [4Fe-4S] cluster serves as cofactor.

Its subcellular location is the plastid. It localises to the chloroplast stroma. It catalyses the reaction dimethylallyl diphosphate + 2 oxidized [2Fe-2S]-[ferredoxin] + H2O = (2E)-4-hydroxy-3-methylbut-2-enyl diphosphate + 2 reduced [2Fe-2S]-[ferredoxin] + 2 H(+). It carries out the reaction isopentenyl diphosphate + 2 oxidized [2Fe-2S]-[ferredoxin] + H2O = (2E)-4-hydroxy-3-methylbut-2-enyl diphosphate + 2 reduced [2Fe-2S]-[ferredoxin] + 2 H(+). Its pathway is isoprenoid biosynthesis; dimethylallyl diphosphate biosynthesis; dimethylallyl diphosphate from (2E)-4-hydroxy-3-methylbutenyl diphosphate: step 1/1. The protein operates within isoprenoid biosynthesis; isopentenyl diphosphate biosynthesis via DXP pathway; isopentenyl diphosphate from 1-deoxy-D-xylulose 5-phosphate: step 6/6. Its function is as follows. Enzyme of the plastid non-mevalonate pathway for isoprenoid biosynthesis that converts 1-hydroxy-2-methyl-2-(E)-butenyl 4-diphosphate into isopentenyl diphosphate (IPP) and dimethylallyl diphosphate (DMAPP). This chain is 4-hydroxy-3-methylbut-2-enyl diphosphate reductase, chloroplastic, found in Botryococcus braunii (Green alga).